The chain runs to 117 residues: Large ribosomal subunit protein uL18 (117 aa).

It belongs to the universal ribosomal protein uL18 family. Part of the 50S ribosomal subunit; part of the 5S rRNA/L5/L18/L25 subcomplex. Contacts the 5S and 23S rRNAs.

This is one of the proteins that bind and probably mediate the attachment of the 5S RNA into the large ribosomal subunit, where it forms part of the central protuberance. In Aliivibrio fischeri (strain MJ11) (Vibrio fischeri), this protein is Large ribosomal subunit protein uL18.